The following is a 120-amino-acid chain: Holo-[acyl-carrier-protein] synthase (120 aa).

2 residues coordinate Mg(2+): Asp-8 and Glu-58.

This sequence belongs to the P-Pant transferase superfamily. AcpS family. Mg(2+) is required as a cofactor.

The protein localises to the cytoplasm. The catalysed reaction is apo-[ACP] + CoA = holo-[ACP] + adenosine 3',5'-bisphosphate + H(+). Transfers the 4'-phosphopantetheine moiety from coenzyme A to a Ser of acyl-carrier-protein. This chain is Holo-[acyl-carrier-protein] synthase, found in Anoxybacillus flavithermus (strain DSM 21510 / WK1).